Consider the following 102-residue polypeptide: MANKKIRIRLKAYEHRTLDTAAEKIVETATRTGAKVAGPVPLPTERSLYTIIRATHKYKDSREQFEMRTHKRLVDIINPTQKTVDALMKLDLPSGVNVEIKL.

This sequence belongs to the universal ribosomal protein uS10 family. Part of the 30S ribosomal subunit.

In terms of biological role, involved in the binding of tRNA to the ribosomes. In Streptococcus pyogenes serotype M12 (strain MGAS2096), this protein is Small ribosomal subunit protein uS10.